The chain runs to 352 residues: Phenylalanine--tRNA ligase alpha subunit (352 aa).

Glutamate 258 is a Mg(2+) binding site.

Belongs to the class-II aminoacyl-tRNA synthetase family. Phe-tRNA synthetase alpha subunit type 1 subfamily. As to quaternary structure, tetramer of two alpha and two beta subunits. Mg(2+) serves as cofactor.

The protein localises to the cytoplasm. The catalysed reaction is tRNA(Phe) + L-phenylalanine + ATP = L-phenylalanyl-tRNA(Phe) + AMP + diphosphate + H(+). This is Phenylalanine--tRNA ligase alpha subunit from Staphylococcus epidermidis (strain ATCC 35984 / DSM 28319 / BCRC 17069 / CCUG 31568 / BM 3577 / RP62A).